Consider the following 203-residue polypeptide: Probable deoxycytidylate deaminase (203 aa).

The region spanning 27 to 163 (HWDDYFMATS…PTYRASKRML (137 aa)) is the CMP/dCMP-type deaminase domain. H102 contacts Zn(2+). E104 serves as the catalytic Proton donor. Residues C128 and C131 each contribute to the Zn(2+) site.

Belongs to the cytidine and deoxycytidylate deaminase family. The cofactor is Zn(2+).

The enzyme catalyses dCMP + H2O + H(+) = dUMP + NH4(+). Its function is as follows. Supplies the nucleotide substrate for thymidylate synthetase. This Drosophila melanogaster (Fruit fly) protein is Probable deoxycytidylate deaminase.